The following is a 513-amino-acid chain: MQLSPSEISGLIKKRIEKFDNSVELKSEGSIVSVADGIVTIYGLDDVTAGEMIKLPGDVYGLALNLNTDSVGAVVLGDYEHIKEGDKAYCTGRILEVPVGEALLGRVVDALGNPIDGRGEIETAHSSPIEKIAPGVIWRKSVDQALQTGIKSIDSMVPIGRGQRELIIGDRQIGKTAIAIDAIINQKGTGVKCIYVAIGQKASSIANIVRQLEEHGAMEHTIIVAATASDSAALQYIAPYAGCSMGEYFRDRGEDALIVYDDLTKQAWAYRQISLLLRRPPGREAYPGDVFYLHSRLLERAARVNEEYVERFTNGEVKGKTGSLTALPIIETQAGDISAFVPTNVISITDGQIFLETDLFNSGLRPAINPGNSVSRVGGAAQTKIIKKLGGGIRLALAQFRELEAFSQFASDLDEATRSQLNRGQRVTELLKQKQFSTLSIALMALSLYAADNGYLDSLEVSEVIPFESALHALAENKYAEVVAEINETGKYDAEIAEKLKTIVEDCKANQAW.

Residue 169–176 participates in ATP binding; the sequence is GDRQIGKT.

It belongs to the ATPase alpha/beta chains family. F-type ATPases have 2 components, CF(1) - the catalytic core - and CF(0) - the membrane proton channel. CF(1) has five subunits: alpha(3), beta(3), gamma(1), delta(1), epsilon(1). CF(0) has three main subunits: a(1), b(2) and c(9-12). The alpha and beta chains form an alternating ring which encloses part of the gamma chain. CF(1) is attached to CF(0) by a central stalk formed by the gamma and epsilon chains, while a peripheral stalk is formed by the delta and b chains.

It localises to the cell inner membrane. The catalysed reaction is ATP + H2O + 4 H(+)(in) = ADP + phosphate + 5 H(+)(out). Functionally, produces ATP from ADP in the presence of a proton gradient across the membrane. The alpha chain is a regulatory subunit. The polypeptide is ATP synthase subunit alpha (Francisella philomiragia subsp. philomiragia (strain ATCC 25017 / CCUG 19701 / FSC 153 / O#319-036)).